An 851-amino-acid polypeptide reads, in one-letter code: M-phase phosphoprotein 8 (851 aa).

Positions 21-54 (NIGRSPEVEGGGAAGEEKDAATKGTVAVGDSEED) are disordered. 3 positions are modified to phosphoserine: Ser51, Ser85, and Ser136. The 60-residue stretch at 59–118 (FEVERILDMKCEGGKNLYKVRWKGYTSDDDTWEPEVHLEDCKEVLLEFRKKVAENKAKAV) folds into the Chromo domain. The histone H3K9me3 binding stretch occupies residues 80-87 (WKGYTSDD). Positions 133–174 (EADSDIDQQGDTKEDTSPRKKKKKIKYKEDKSPDDLRKKRAK) are disordered. Position 144 is a phosphothreonine (Thr144). Phosphoserine; by CDK1 occurs at positions 149 and 164. Basic and acidic residues predominate over residues 159-169 (YKEDKSPDDLR). 4 positions are modified to phosphoserine: Ser188, Ser263, Ser267, and Ser274. The tract at residues 240 to 302 (REDVKDNRKT…KTGQDTVQES (63 aa)) is disordered. Residues 269 to 278 (TLEDESEDFL) show a composition bias toward acidic residues. The segment covering 279–295 (SDNKEKQNVRTAKDKTG) has biased composition (basic and acidic residues). A Phosphoserine modification is found at Ser313. The segment at 315-428 (EEAGTRVRRK…DKEEKARKEP (114 aa)) is disordered. A compositionally biased stretch (basic and acidic residues) spans 329–364 (RKFEEPKEIKKLENTNNFLERKMIPKKQRNQDKGRS). Residue Thr379 is modified to Phosphothreonine; by CDK1. Phosphoserine occurs at positions 386 and 394. The segment covering 401-428 (EKERKNEPKEKYQKRYDFDKEEKARKEP) has biased composition (basic and acidic residues). At Thr447 the chain carries Phosphothreonine. 4 ANK repeats span residues 591 to 620 (TGMT…KVNG), 624 to 653 (NGTT…FVNV), 657 to 686 (NGET…DCNI), and 690 to 719 (HQNS…TLSR).

As to quaternary structure, homodimer. Interacts (via chromo domain) with histone H3K9me3. Has the highest affinity for H3K9me3, and lesser affinity for H3K9me2 and H3K9me1. Component of the HUSH complex; at least composed of TASOR, PPHLN1 and MPHOSPH8. Interacts with DNMT3, EHMT1 and SETDB1. Interacts with MORC2; the interaction associateS MORC2 with the HUSH complex which recruits MORC2 to heterochromatic loci. Interacts with ZNF638; leading to recruitment of the HUSH complex to unintegrated retroviral DNA. Interacts with TASOR. Post-translationally, phosphorylated in M (mitotic) phase. Phosphorylation by CDK1 promotes dissociation from chromatin.

The protein resides in the nucleus. It localises to the chromosome. Heterochromatin component that specifically recognizes and binds methylated 'Lys-9' of histone H3 (H3K9me) and promotes recruitment of proteins that mediate epigenetic repression. Mediates recruitment of the HUSH complex to H3K9me3 sites: the HUSH complex is recruited to genomic loci rich in H3K9me3 and is required to maintain transcriptional silencing by promoting recruitment of SETDB1, a histone methyltransferase that mediates further deposition of H3K9me3, as well as MORC2. Binds H3K9me and promotes DNA methylation by recruiting DNMT3A to target CpG sites; these can be situated within the coding region of the gene. Mediates down-regulation of CDH1 expression. Also represses L1 retrotransposons in collaboration with MORC2 and, probably, SETDB1, the silencing is dependent of repressive epigenetic modifications, such as H3K9me3 mark. Silencing events often occur within introns of transcriptionally active genes, and lead to the down-regulation of host gene expression. The HUSH complex is also involved in the silencing of unintegrated retroviral DNA by being recruited by ZNF638: some part of the retroviral DNA formed immediately after infection remains unintegrated in the host genome and is transcriptionally repressed. The chain is M-phase phosphoprotein 8 from Rattus norvegicus (Rat).